We begin with the raw amino-acid sequence, 125 residues long: Large ribosomal subunit protein bL12 (125 aa).

It belongs to the bacterial ribosomal protein bL12 family. As to quaternary structure, homodimer. Part of the ribosomal stalk of the 50S ribosomal subunit. Forms a multimeric L10(L12)X complex, where L10 forms an elongated spine to which 2 to 4 L12 dimers bind in a sequential fashion. Binds GTP-bound translation factors.

Its function is as follows. Forms part of the ribosomal stalk which helps the ribosome interact with GTP-bound translation factors. Is thus essential for accurate translation. The sequence is that of Large ribosomal subunit protein bL12 from Mannheimia succiniciproducens (strain KCTC 0769BP / MBEL55E).